The sequence spans 365 residues: tRNA 2-selenouridine synthase (365 aa).

Residues 12–136 (FLHDVPLLDV…LRMFLIDTTQ (125 aa)) enclose the Rhodanese domain. Cys-95 serves as the catalytic S-selanylcysteine intermediate.

The protein belongs to the SelU family. Monomer.

It carries out the reaction 5-methylaminomethyl-2-thiouridine(34) in tRNA + selenophosphate + (2E)-geranyl diphosphate + H2O + H(+) = 5-methylaminomethyl-2-selenouridine(34) in tRNA + (2E)-thiogeraniol + phosphate + diphosphate. The enzyme catalyses 5-methylaminomethyl-2-thiouridine(34) in tRNA + (2E)-geranyl diphosphate = 5-methylaminomethyl-S-(2E)-geranyl-thiouridine(34) in tRNA + diphosphate. The catalysed reaction is 5-methylaminomethyl-S-(2E)-geranyl-thiouridine(34) in tRNA + selenophosphate + H(+) = 5-methylaminomethyl-2-(Se-phospho)selenouridine(34) in tRNA + (2E)-thiogeraniol. It catalyses the reaction 5-methylaminomethyl-2-(Se-phospho)selenouridine(34) in tRNA + H2O = 5-methylaminomethyl-2-selenouridine(34) in tRNA + phosphate. Its function is as follows. Involved in the post-transcriptional modification of the uridine at the wobble position (U34) of tRNA(Lys), tRNA(Glu) and tRNA(Gln). Catalyzes the conversion of 2-thiouridine (S2U-RNA) to 2-selenouridine (Se2U-RNA). Acts in a two-step process involving geranylation of 2-thiouridine (S2U) to S-geranyl-2-thiouridine (geS2U) and subsequent selenation of the latter derivative to 2-selenouridine (Se2U) in the tRNA chain. This chain is tRNA 2-selenouridine synthase, found in Verminephrobacter eiseniae (strain EF01-2).